Reading from the N-terminus, the 262-residue chain is Shikimate dehydrogenase (NADP(+)) (262 aa).

Residues 13–15 and T59 contribute to the shikimate site; that span reads SLS. K63 acts as the Proton acceptor in catalysis. D75 serves as a coordination point for NADP(+). Positions 84 and 99 each coordinate shikimate. NADP(+) contacts are provided by residues 122–126, 144–149, and M205; these read GAGGA and NRTLEK. Y207 serves as a coordination point for shikimate. Residue G228 participates in NADP(+) binding.

It belongs to the shikimate dehydrogenase family. In terms of assembly, homodimer.

It catalyses the reaction shikimate + NADP(+) = 3-dehydroshikimate + NADPH + H(+). Its pathway is metabolic intermediate biosynthesis; chorismate biosynthesis; chorismate from D-erythrose 4-phosphate and phosphoenolpyruvate: step 4/7. Functionally, involved in the biosynthesis of the chorismate, which leads to the biosynthesis of aromatic amino acids. Catalyzes the reversible NADPH linked reduction of 3-dehydroshikimate (DHSA) to yield shikimate (SA). The protein is Shikimate dehydrogenase (NADP(+)) of Ignicoccus hospitalis (strain KIN4/I / DSM 18386 / JCM 14125).